Reading from the N-terminus, the 361-residue chain is tRNA N6-adenosine threonylcarbamoyltransferase (361 aa).

The Fe cation site is built by His-110 and His-114. Residues 132-136, Asp-165, Gly-178, Asp-182, and Asn-284 each bind substrate; that span reads LVSGG. Asp-312 is a binding site for Fe cation.

It belongs to the KAE1 / TsaD family. Requires Fe(2+) as cofactor.

The protein resides in the cytoplasm. It catalyses the reaction L-threonylcarbamoyladenylate + adenosine(37) in tRNA = N(6)-L-threonylcarbamoyladenosine(37) in tRNA + AMP + H(+). Required for the formation of a threonylcarbamoyl group on adenosine at position 37 (t(6)A37) in tRNAs that read codons beginning with adenine. Is involved in the transfer of the threonylcarbamoyl moiety of threonylcarbamoyl-AMP (TC-AMP) to the N6 group of A37, together with TsaE and TsaB. TsaD likely plays a direct catalytic role in this reaction. This Desulfovibrio desulfuricans (strain ATCC 27774 / DSM 6949 / MB) protein is tRNA N6-adenosine threonylcarbamoyltransferase.